The following is a 101-amino-acid chain: Urease subunit beta (101 aa).

The protein belongs to the urease beta subunit family. In terms of assembly, heterotrimer of UreA (gamma), UreB (beta) and UreC (alpha) subunits. Three heterotrimers associate to form the active enzyme.

It is found in the cytoplasm. It carries out the reaction urea + 2 H2O + H(+) = hydrogencarbonate + 2 NH4(+). Its pathway is nitrogen metabolism; urea degradation; CO(2) and NH(3) from urea (urease route): step 1/1. In Ruegeria sp. (strain TM1040) (Silicibacter sp.), this protein is Urease subunit beta.